The sequence spans 137 residues: Peptide methionine sulfoxide reductase MsrB (137 aa).

The region spanning 7 to 129 (VDDLKENLSE…NSASLSFTDE (123 aa)) is the MsrB domain. Residues C46, C49, C95, and C98 each coordinate Zn(2+). The Nucleophile role is filled by C118.

Belongs to the MsrB Met sulfoxide reductase family. Zn(2+) serves as cofactor.

The catalysed reaction is L-methionyl-[protein] + [thioredoxin]-disulfide + H2O = L-methionyl-(R)-S-oxide-[protein] + [thioredoxin]-dithiol. The chain is Peptide methionine sulfoxide reductase MsrB from Escherichia fergusonii (strain ATCC 35469 / DSM 13698 / CCUG 18766 / IAM 14443 / JCM 21226 / LMG 7866 / NBRC 102419 / NCTC 12128 / CDC 0568-73).